The sequence spans 467 residues: Probable Xaa-Pro aminopeptidase pepP (467 aa).

4 residues coordinate Mn(2+): Asp264, Asp275, Glu398, and Glu438.

The protein belongs to the peptidase M24B family. Requires Mn(2+) as cofactor.

The enzyme catalyses Release of any N-terminal amino acid, including proline, that is linked to proline, even from a dipeptide or tripeptide.. In terms of biological role, catalyzes the removal of a penultimate prolyl residue from the N-termini of peptides. The protein is Probable Xaa-Pro aminopeptidase pepP (pepP) of Neosartorya fischeri (strain ATCC 1020 / DSM 3700 / CBS 544.65 / FGSC A1164 / JCM 1740 / NRRL 181 / WB 181) (Aspergillus fischerianus).